The following is a 591-amino-acid chain: MAQGKVARVNGPLVVAEGMKDAQMFEVVEVGEPRLVGEITRIEGDRAYIQVYEDTSGIRPGEPVFGSGAPLSVELGPGLLGQLFDGLLRPLGEIKEITKSPFIKRGIKLPTLNREKEWHFVPKMKKGDKVEPGDILGVVQETGLVEHRILVPPYVHGKLKEVVAEGDYKVEDNVAIVDMNGDEVPVKMMQKWPVRVPRPFKEKLDPSQPLLTGVRILDTIFPIAKGGTAAIPGPFGSGKTVTLQSLSKWSEAKIVIFVGCGERGNEMTDELRSFPKLKDPWTGRPLLERTVMVANTSNMPVAAREASIYVGVTLAEYFRDQGYDVLTVADSTSRWAEALRDLGGRMEEMPAEEGFPSYLSSRIAEYYERAGRVRTLGNPERYGSVTLASAVSPPGGDFTEPVTSTTLRFVRVFWPLDVSLAQARHYPAINWLQGFSSYVDLVSDWWIKNVDPDWRIMRDFMVRTLLREDELKQIVRLVGPESLAEKDKLTLEVARLIKEAFLKQNAYDDIDAFSSPQKQARIMKLIYHYNQYATNAVERGIPVKKIVDKITVVPDIIRSKATIKNNELQKYDELENKLKAQFDELLKEAGA.

233–240 is a binding site for ATP; that stretch reads GPFGSGKT.

Belongs to the ATPase alpha/beta chains family. Has multiple subunits with at least A(3), B(3), C, D, E, F, H, I and proteolipid K(x).

Its subcellular location is the cell membrane. The enzyme catalyses ATP + H2O + 4 H(+)(in) = ADP + phosphate + 5 H(+)(out). Component of the A-type ATP synthase that produces ATP from ADP in the presence of a proton gradient across the membrane. The A chain is the catalytic subunit. This is A-type ATP synthase subunit A from Metallosphaera sedula (strain ATCC 51363 / DSM 5348 / JCM 9185 / NBRC 15509 / TH2).